We begin with the raw amino-acid sequence, 126 residues long: MARLVGVDLPRDKRLEVALTYIYGIGRTRALETLAATGISPDLRVRDLTDDDLLKLREWIEANYRVEGDLRREVAADIRRKIEIGCYQGIRHRRGLPVRGQRTHTNARTRKGPRKTVAGKKKPGKK.

A disordered region spans residues 95–126 (GLPVRGQRTHTNARTRKGPRKTVAGKKKPGKK).

This sequence belongs to the universal ribosomal protein uS13 family. As to quaternary structure, part of the 30S ribosomal subunit. Forms a loose heterodimer with protein S19. Forms two bridges to the 50S subunit in the 70S ribosome.

Its function is as follows. Located at the top of the head of the 30S subunit, it contacts several helices of the 16S rRNA. In the 70S ribosome it contacts the 23S rRNA (bridge B1a) and protein L5 of the 50S subunit (bridge B1b), connecting the 2 subunits; these bridges are implicated in subunit movement. Contacts the tRNAs in the A and P-sites. This Acidothermus cellulolyticus (strain ATCC 43068 / DSM 8971 / 11B) protein is Small ribosomal subunit protein uS13.